Reading from the N-terminus, the 358-residue chain is Tripartite motif-containing protein 54 (358 aa).

Residues 26 to 82 (CPICLEMFSKPVVILPCQHNLCRKCANDVFQASNPLWQSRGSTTVSSGGRFRCPSCR) form an RING-type zinc finger. A B box-type zinc finger spans residues 121 to 163 (EQHLMCEEHEEEKINIYCLSCEVPTCSLCKVFGAHKDCEVAPL). Zn(2+) is bound by residues Cys126, His129, Cys149, and His155. The mediates microtubule-binding and homooligomerization stretch occupies residues 168 to 211 (KRQKSELSDGIAMLVAGNDRVQAVITQMEEVCQTIEDNSRRQKQ). Residues 220–258 (LCAVLEERKGELLQALAREQEEKLQRVRGLIRQYGDHLE) adopt a coiled-coil conformation. The region spanning 271-329 (MEEPQMALYLQQAKELINKVGAMSKVELAGRPEPGYESMEQFTVRVEHVAEMLRTIDFQ) is the COS domain. Residues 326 to 358 (IDFQPGASGEEEEVAPDGEEGSAGPEEERPDGP) form a disordered region. Over residues 334-345 (GEEEEVAPDGEE) the composition is skewed to acidic residues.

As to quaternary structure, homooligomer and heterooligomer. Interacts with tubulin. Interacts with TRIM63 and probably with TRIM55. In terms of tissue distribution, specifically expressed in heart and skeletal muscle.

It localises to the cytoplasm. Its subcellular location is the cytoskeleton. It is found in the myofibril. The protein resides in the sarcomere. The protein localises to the z line. May bind and stabilize microtubules during myotubes formation. This Homo sapiens (Human) protein is Tripartite motif-containing protein 54 (TRIM54).